We begin with the raw amino-acid sequence, 246 residues long: Flagellar L-ring protein (246 aa).

An N-terminal signal peptide occupies residues 1-20; that stretch reads MMQKCLSPKTLIAALVVLSA. Cys-21 carries N-palmitoyl cysteine lipidation. Cys-21 is lipidated: S-diacylglycerol cysteine.

It belongs to the FlgH family. In terms of assembly, the basal body constitutes a major portion of the flagellar organelle and consists of four rings (L,P,S, and M) mounted on a central rod.

It is found in the cell outer membrane. The protein localises to the bacterial flagellum basal body. Its function is as follows. Assembles around the rod to form the L-ring and probably protects the motor/basal body from shearing forces during rotation. The chain is Flagellar L-ring protein from Ruegeria pomeroyi (strain ATCC 700808 / DSM 15171 / DSS-3) (Silicibacter pomeroyi).